The primary structure comprises 402 residues: Deoxyguanosinetriphosphate triphosphohydrolase-like protein 2 (402 aa).

One can recognise an HD domain in the interval 72-215 (RLTHSLEVAQ…MDLADEIAYA (144 aa)).

Belongs to the dGTPase family. Type 2 subfamily.

The sequence is that of Deoxyguanosinetriphosphate triphosphohydrolase-like protein 2 from Vibrio cholerae serotype O1 (strain ATCC 39315 / El Tor Inaba N16961).